A 1362-amino-acid polypeptide reads, in one-letter code: ATP-dependent RNA helicase dhx29 (1362 aa).

The segment covering 1–10 (MGGKNKKNRH) has biased composition (basic residues). The disordered stretch occupies residues 1–76 (MGGKNKKNRH…FASSSDSGVS (76 aa)). Low complexity predominate over residues 18 to 27 (GATAAANRPR). Positions 28–41 (AAAEPRPGGEDAAK) are enriched in basic and acidic residues. Low complexity predominate over residues 66–76 (SFASSSDSGVS). Positions 89–109 (EAKLEKRIISLINEHKKLNSN) form a coiled coil. Disordered regions lie at residues 182–215 (QRAR…LKGN) and 229–257 (EQGS…DPNE). Acidic residues predominate over residues 231 to 242 (GSDDDDDDDDVK). Over residues 243-257 (EEEKETTLEKFDPNE) the composition is skewed to basic and acidic residues. Residues 285-305 (QKEAQERIRGYQQEMKSLEDH) adopt a coiled-coil conformation. Residues 317-336 (VKSESKQPKPALPPSEDEPL) are disordered. A Helicase ATP-binding domain is found at 576-749 (LETLKRHRVI…FTHCPIIRIS (174 aa)). Position 589–596 (589–596 (GETGSGKS)) interacts with ATP. The DEAH box motif lies at 696–699 (DEVH). One can recognise a Helicase C-terminal domain in the interval 852–1021 (DISPEYRNVE…ELCLHIMKCD (170 aa)).

The protein belongs to the DEAD box helicase family. DEAH subfamily. As to quaternary structure, part of the 43S pre-initiation complex (PIC).

The protein resides in the cytoplasm. It carries out the reaction ATP + H2O = ADP + phosphate + H(+). ATP-binding RNA helicase involved in translation initiation. Part of the 43S pre-initiation complex that is required for efficient initiation on mRNAs of higher eukaryotes with structured 5'-UTRs by promoting efficient NTPase-dependent 48S complex formation. Specifically binds to the 40S ribosome near the mRNA entrance. Does not possess a processive helicase activity. The polypeptide is ATP-dependent RNA helicase dhx29 (Xenopus laevis (African clawed frog)).